A 785-amino-acid polypeptide reads, in one-letter code: Penicillin-binding protein 1A (785 aa).

Residues 1–6 lie on the Cytoplasmic side of the membrane; the sequence is MYKSLF. A helical; Signal-anchor for type II membrane protein membrane pass occupies residues 7-27; it reads FFLKIFAILILLGCSVTAYII. Residues 28–785 lie on the Periplasmic side of the membrane; that stretch reads YHYSHDLPDY…GISDQSQEIY (758 aa). A transglycosylase region spans residues 49 to 220; the sequence is TRIYSRDGKL…SELNPDKNYS (172 aa). The active-site Proton donor; for transglycosylase activity is the Glu-87. Residues 398 to 711 form a transpeptidase region; that stretch reads DVIVVEPIKD…SNVVLPIFID (314 aa). Ser-457 (acyl-ester intermediate; for transpeptidase activity) is an active-site residue.

The protein in the N-terminal section; belongs to the glycosyltransferase 51 family. It in the C-terminal section; belongs to the transpeptidase family.

It localises to the cell inner membrane. The catalysed reaction is [GlcNAc-(1-&gt;4)-Mur2Ac(oyl-L-Ala-gamma-D-Glu-L-Lys-D-Ala-D-Ala)](n)-di-trans,octa-cis-undecaprenyl diphosphate + beta-D-GlcNAc-(1-&gt;4)-Mur2Ac(oyl-L-Ala-gamma-D-Glu-L-Lys-D-Ala-D-Ala)-di-trans,octa-cis-undecaprenyl diphosphate = [GlcNAc-(1-&gt;4)-Mur2Ac(oyl-L-Ala-gamma-D-Glu-L-Lys-D-Ala-D-Ala)](n+1)-di-trans,octa-cis-undecaprenyl diphosphate + di-trans,octa-cis-undecaprenyl diphosphate + H(+). The enzyme catalyses Preferential cleavage: (Ac)2-L-Lys-D-Ala-|-D-Ala. Also transpeptidation of peptidyl-alanyl moieties that are N-acyl substituents of D-alanine.. Its pathway is cell wall biogenesis; peptidoglycan biosynthesis. In terms of biological role, cell wall formation. Synthesis of cross-linked peptidoglycan from the lipid intermediates. The enzyme has a penicillin-insensitive transglycosylase N-terminal domain (formation of linear glycan strands) and a penicillin-sensitive transpeptidase C-terminal domain (cross-linking of the peptide subunits). The polypeptide is Penicillin-binding protein 1A (mrcA) (Rickettsia typhi (strain ATCC VR-144 / Wilmington)).